The sequence spans 262 residues: uncharacterized protein (262 aa).

Belongs to the AB hydrolase superfamily. AB hydrolase 2 family.

This is an uncharacterized protein from Mycosarcoma maydis (Corn smut fungus).